Reading from the N-terminus, the 576-residue chain is Arginine--tRNA ligase (576 aa).

Residues 122 to 132 (PNVAKQMHVGH) carry the 'HIGH' region motif.

It belongs to the class-I aminoacyl-tRNA synthetase family. In terms of assembly, monomer.

It is found in the cytoplasm. It catalyses the reaction tRNA(Arg) + L-arginine + ATP = L-arginyl-tRNA(Arg) + AMP + diphosphate. This Yersinia enterocolitica serotype O:8 / biotype 1B (strain NCTC 13174 / 8081) protein is Arginine--tRNA ligase.